The following is a 138-amino-acid chain: Putative pre-16S rRNA nuclease (138 aa).

Belongs to the YqgF nuclease family.

It is found in the cytoplasm. Functionally, could be a nuclease involved in processing of the 5'-end of pre-16S rRNA. The chain is Putative pre-16S rRNA nuclease from Enterobacter sp. (strain 638).